Here is a 259-residue protein sequence, read N- to C-terminus: Putative hydro-lyase Bphyt_4813 (259 aa).

The protein belongs to the D-glutamate cyclase family.

The protein is Putative hydro-lyase Bphyt_4813 of Paraburkholderia phytofirmans (strain DSM 17436 / LMG 22146 / PsJN) (Burkholderia phytofirmans).